Reading from the N-terminus, the 337-residue chain is N-acetyl-gamma-glutamyl-phosphate reductase (337 aa).

C149 is a catalytic residue.

The protein belongs to the NAGSA dehydrogenase family. Type 1 subfamily.

The protein localises to the cytoplasm. It carries out the reaction N-acetyl-L-glutamate 5-semialdehyde + phosphate + NADP(+) = N-acetyl-L-glutamyl 5-phosphate + NADPH + H(+). It functions in the pathway amino-acid biosynthesis; L-arginine biosynthesis; N(2)-acetyl-L-ornithine from L-glutamate: step 3/4. Functionally, catalyzes the NADPH-dependent reduction of N-acetyl-5-glutamyl phosphate to yield N-acetyl-L-glutamate 5-semialdehyde. The protein is N-acetyl-gamma-glutamyl-phosphate reductase of Wolinella succinogenes (strain ATCC 29543 / DSM 1740 / CCUG 13145 / JCM 31913 / LMG 7466 / NCTC 11488 / FDC 602W) (Vibrio succinogenes).